A 274-amino-acid chain; its full sequence is Major capsid protein (274 aa).

It localises to the virion. Functionally, assembles to form an icosahedral capsid. In Staphylococcus phage phiMR11, this protein is Major capsid protein.